Here is a 205-residue protein sequence, read N- to C-terminus: MSKRETTKYKIDRRMGENIWGRPKSPVNRRDYGPGQHGQRRKGKLSDYGVQLRAKQKLKGFYGDISEKQFRKTYEEAARRRGDTGENLIGLLESRLDAVIYRAKFVPTIFASRQFINHGHVNVNGRRTNIQSYRCKPGDVIEVREKSKQLVLVLESVQLAERDVPEYIEADHNQMKATFVRIPAFADVPYAVQMEPNLVVEFYSR.

Basic and acidic residues predominate over residues 1-16 (MSKRETTKYKIDRRMG). Residues 1–46 (MSKRETTKYKIDRRMGENIWGRPKSPVNRRDYGPGQHGQRRKGKLS) are disordered. The 64-residue stretch at 94 to 157 (SRLDAVIYRA…KQLVLVLESV (64 aa)) folds into the S4 RNA-binding domain.

The protein belongs to the universal ribosomal protein uS4 family. Part of the 30S ribosomal subunit. Contacts protein S5. The interaction surface between S4 and S5 is involved in control of translational fidelity.

Functionally, one of the primary rRNA binding proteins, it binds directly to 16S rRNA where it nucleates assembly of the body of the 30S subunit. Its function is as follows. With S5 and S12 plays an important role in translational accuracy. This Bartonella quintana (strain Toulouse) (Rochalimaea quintana) protein is Small ribosomal subunit protein uS4.